We begin with the raw amino-acid sequence, 325 residues long: VSG expression site-associated protein 117A (325 aa).

The signal sequence occupies residues 1–23 (MKVTIVELVVWLFSVNFFVVVAE). N-linked (GlcNAc...) asparagine glycans are attached at residues asparagine 72, asparagine 290, and asparagine 313.

Its function is as follows. Not known but may be related to activation of the variant surface glycoprotein genes. The chain is VSG expression site-associated protein 117A from Trypanosoma brucei brucei.